Here is a 236-residue protein sequence, read N- to C-terminus: UPF0280 protein Mlab_0453 (236 aa).

The protein belongs to the UPF0280 family.

The polypeptide is UPF0280 protein Mlab_0453 (Methanocorpusculum labreanum (strain ATCC 43576 / DSM 4855 / Z)).